Reading from the N-terminus, the 140-residue chain is Cytochrome B5 isoform D (140 aa).

The Cytochrome b5 heme-binding domain maps to 5–81; sequence GKVFTLSEVS…LDEYYVGDID (77 aa). Heme is bound by residues H40 and H64. The chain crosses the membrane as a helical span at residues 109 to 129; that stretch reads FVIKLLQFLVPLLILGLAFGI.

Belongs to the cytochrome b5 family. Interacts with CER1, BI-1, FAH1 and FAH2. In terms of tissue distribution, expressed in roots, stems, leaves, flowers and siliques.

It is found in the endoplasmic reticulum membrane. Membrane bound hemoprotein which function as an electron carrier for several membrane bound oxygenases, including fatty acid desaturases. This Arabidopsis thaliana (Mouse-ear cress) protein is Cytochrome B5 isoform D.